We begin with the raw amino-acid sequence, 305 residues long: Serine/threonine-protein kinase 16 (305 aa).

A lipid anchor (N-myristoyl glycine) is attached at Gly2. 2 S-palmitoyl cysteine lipidation sites follow: Cys6 and Cys8. In terms of domain architecture, Protein kinase spans 20–293 (YLFVQKLGEG…PVLLSQLEAL (274 aa)). Residues 26-34 (LGEGGFSYV) and Lys49 contribute to the ATP site. The active-site Proton acceptor is the Asp148. Residues 166-202 (DLGSMNQACIQVEGSRQALALQDWAAQRCTISYRAPE) are activation loop. At Ser197 the chain carries Phosphoserine; by autocatalysis. Phosphotyrosine; by autocatalysis is present on Tyr198.

The protein belongs to the protein kinase superfamily. Ser/Thr protein kinase family. Monomer. Interacts with DRG1 (via its N-terminal); the interaction phosphorylates DRG1. Mainly autophosphorylated on serine/threonine residues. Also autophosphorylated on Tyr-198. In terms of tissue distribution, ubiquitously expressed at low levels. Relatively higher levels in testis, kidney and liver.

The protein localises to the cytoplasm. The protein resides in the perinuclear region. It localises to the membrane. It carries out the reaction L-seryl-[protein] + ATP = O-phospho-L-seryl-[protein] + ADP + H(+). It catalyses the reaction L-threonyl-[protein] + ATP = O-phospho-L-threonyl-[protein] + ADP + H(+). The catalysed reaction is L-tyrosyl-[protein] + ATP = O-phospho-L-tyrosyl-[protein] + ADP + H(+). Its function is as follows. Membrane-associated protein kinase that phosphorylates on serine and threonine residues. In vitro substrates include DRG1, ENO1 and EIF4EBP1. Also autophosphorylates. May be involved in secretory vesicle trafficking or intracellular signaling. May have a role in regulating stromal-epithelial interactions that occur during ductal morphogenesis in the mammary gland. May be involved in TGF-beta signaling. Able to autophosphorylate on Tyr residue; it is however unclear whether it has tyrosine-protein kinase toward other proteins. This is Serine/threonine-protein kinase 16 (Stk16) from Mus musculus (Mouse).